The primary structure comprises 361 residues: Protein SGT1 homolog (361 aa).

TPR repeat units follow at residues 3–36 (ASDLESKAKEAFVDDDFELAAELYTQAIDAGPAT), 37–70 (ADLYADRAQAHIKLGNYTEAVADANKAIGLDPTM), and 71–104 (HKAYYRKGAACIKLEEYQTAKAALELGSSYAPGD). Thr150 carries the post-translational modification Phosphothreonine. The CS domain maps to 159–248 (KPKYRHDYYN…AEQVTWTTLD (90 aa)). Residues 255 to 295 (AIPQKISTPAETAPRPSYPSSKSKKDWDKLEAEVKKEEKEE) form a disordered region. Thr262 carries the phosphothreonine modification. The SGS domain maps to 271 to 361 (SYPSSKSKKD…DGMELKKWEI (91 aa)). The segment covering 277–295 (SKKDWDKLEAEVKKEEKEE) has biased composition (basic and acidic residues).

This sequence belongs to the SGT1 family. Constitutively phosphorylated at Thr-262 and phosphorylated at Thr-150 upon infection with the fungal pathogen Ustilago maydis.

It localises to the cytoplasm. The protein localises to the nucleus. May act as positive regulator of basal defense. May be involved in basal disease resistance to the fungal pathogen Ustilago maydis. The protein is Protein SGT1 homolog of Zea mays (Maize).